The following is a 250-amino-acid chain: DNA repair protein RecO (250 aa).

Belongs to the RecO family.

Its function is as follows. Involved in DNA repair and RecF pathway recombination. The chain is DNA repair protein RecO from Thermodesulfovibrio yellowstonii (strain ATCC 51303 / DSM 11347 / YP87).